Here is a 282-residue protein sequence, read N- to C-terminus: B3 domain-containing protein At5g06250 (282 aa).

Positions 46-159 (FEKSLTPSDV…RLFIGWRRRG (114 aa)) form a DNA-binding region, TF-B3.

The protein localises to the nucleus. In Arabidopsis thaliana (Mouse-ear cress), this protein is B3 domain-containing protein At5g06250.